We begin with the raw amino-acid sequence, 194 residues long: Xanthine phosphoribosyltransferase (194 aa).

2 residues coordinate xanthine: Leu-20 and Asn-27. 128–132 (ANGEA) contributes to the 5-phospho-alpha-D-ribose 1-diphosphate binding site. Xanthine is bound at residue Lys-156.

This sequence belongs to the purine/pyrimidine phosphoribosyltransferase family. Xpt subfamily. As to quaternary structure, homodimer.

It is found in the cytoplasm. It catalyses the reaction XMP + diphosphate = xanthine + 5-phospho-alpha-D-ribose 1-diphosphate. The protein operates within purine metabolism; XMP biosynthesis via salvage pathway; XMP from xanthine: step 1/1. In terms of biological role, converts the preformed base xanthine, a product of nucleic acid breakdown, to xanthosine 5'-monophosphate (XMP), so it can be reused for RNA or DNA synthesis. The chain is Xanthine phosphoribosyltransferase from Macrococcus caseolyticus (strain JCSC5402) (Macrococcoides caseolyticum).